The following is a 526-amino-acid chain: ESX-1 secretion-associated protein EspB (526 aa).

Residues 1–23 (MSEELKYELPGLERKAHECESTR) show a composition bias toward basic and acidic residues. Disordered stretches follow at residues 1–35 (MSEE…KPDE), 91–110 (RQMN…VPDM), and 271–526 (QIQE…GKQQ). Over residues 303 to 328 (GGPGGPGSGSGGGSGGGASGGSGGGT) the composition is skewed to gly residues. Positions 335–362 (PSTDPSMSPMSTNSAGEEQSSGSPSSGG) are enriched in low complexity. Residues 363-387 (SSSGGSPSGGSPSGGGAPSSGGMPE) show a composition bias toward gly residues. The span at 393–405 (DMPGGPDIPGLDD) shows a compositional bias: low complexity. A compositionally biased stretch (gly residues) spans 413–429 (AGGGGGGGVGGGGGGGM). Residues 430–440 (PAAPLGPAVGA) are compositionally biased toward low complexity. Positions 451-484 (RGGGVGVPTGTGGGAGGMMGGGMGGMGAGHGQGQ) are enriched in gly residues. Over residues 485–508 (GKEKKRDPKLAPDEDLYTEDRAHS) the composition is skewed to basic and acidic residues.

Belongs to the EspB family.

The protein localises to the secreted. Involved in DNA conjugation, at least in the recipient strain. The protein is ESX-1 secretion-associated protein EspB of Mycolicibacterium smegmatis (strain MKD8) (Mycobacterium smegmatis).